The following is a 484-amino-acid chain: uncharacterized protein (484 aa).

An N-acetyltransferase domain is found at 334–484 (IIIRQITDND…ENEWIYEVNL (151 aa)).

This is an uncharacterized protein from Methanocaldococcus jannaschii (strain ATCC 43067 / DSM 2661 / JAL-1 / JCM 10045 / NBRC 100440) (Methanococcus jannaschii).